The primary structure comprises 593 residues: Probable metalloprotease ARX1 (593 aa).

It belongs to the peptidase M24 family. Component of the nucleoplasmic and cytoplasmic pre-60S ribosomal particles. Interacts directly with REI1.

It is found in the cytoplasm. The protein localises to the nucleus. Probable metalloprotease involved in proper assembly of pre-ribosomal particles during the biogenesis of the 60S ribosomal subunit. Accompanies the pre-60S particles to the cytoplasm. The protein is Probable metalloprotease ARX1 (ARX1) of Saccharomyces cerevisiae (strain ATCC 204508 / S288c) (Baker's yeast).